The chain runs to 231 residues: Large ribosomal subunit protein uL1 (231 aa).

The protein belongs to the universal ribosomal protein uL1 family. As to quaternary structure, part of the 50S ribosomal subunit.

Functionally, binds directly to 23S rRNA. The L1 stalk is quite mobile in the ribosome, and is involved in E site tRNA release. In terms of biological role, protein L1 is also a translational repressor protein, it controls the translation of the L11 operon by binding to its mRNA. The chain is Large ribosomal subunit protein uL1 from Stutzerimonas stutzeri (strain A1501) (Pseudomonas stutzeri).